The sequence spans 701 residues: Ubiquitin thioesterase zranb1-B (701 aa).

3 consecutive RanBP2-type zinc fingers follow at residues 3 to 33 (EDGI…PRPS), 79 to 108 (TSSK…QRRT), and 143 to 173 (IKGQ…PTPN). Zn(2+) contacts are provided by cysteine 10, cysteine 13, cysteine 24, cysteine 27, cysteine 85, cysteine 88, cysteine 99, and cysteine 102. Polar residues predominate over residues 108–121 (TRSPTESPQSSGSG). Residues 108-129 (TRSPTESPQSSGSGLRSIPGPI) are disordered. Residues cysteine 150, cysteine 153, cysteine 164, and cysteine 167 each coordinate Zn(2+). Residues 197 to 220 (RWRGGCSSSNSQRRSPPTSKRDSD) are disordered. Residues 202 to 214 (CSSSNSQRRSPPT) are compositionally biased toward polar residues. ANK repeat units follow at residues 253-283 (RKTD…SGGD) and 306-333 (YTLV…QHAA). One can recognise an OTU domain in the interval 425–585 (LYALWNRTAG…RGHFSALVAM (161 aa)). The Nucleophile role is filled by cysteine 436. Histidine 578 acts as the Proton acceptor in catalysis.

It belongs to the peptidase C64 family.

It is found in the cytoplasm. Its subcellular location is the nucleus. The catalysed reaction is Thiol-dependent hydrolysis of ester, thioester, amide, peptide and isopeptide bonds formed by the C-terminal Gly of ubiquitin (a 76-residue protein attached to proteins as an intracellular targeting signal).. Ubiquitin thioesterase, which specifically hydrolyzes 'Lys-29'-linked and 'Lys-33'-linked diubiquitin. Also cleaves 'Lys-63'-linked chains, but with 40-fold less efficiency compared to 'Lys-29'-linked ones. Positive regulator of the Wnt signaling pathway that deubiquitinates apc protein, a negative regulator of Wnt-mediated transcription. Acts as a regulator of autophagy by mediating deubiquitination of pik3c3/vps34, thereby promoting autophagosome maturation. Plays a role in the regulation of cell morphology and cytoskeletal organization. Required in the stress fiber dynamics and cell migration. This is Ubiquitin thioesterase zranb1-B (zranb1-b) from Xenopus laevis (African clawed frog).